The following is a 71-amino-acid chain: Small ribosomal subunit protein bS18 (71 aa).

This sequence belongs to the bacterial ribosomal protein bS18 family. As to quaternary structure, part of the 30S ribosomal subunit. Forms a tight heterodimer with protein bS6.

Binds as a heterodimer with protein bS6 to the central domain of the 16S rRNA, where it helps stabilize the platform of the 30S subunit. In Synechococcus elongatus (strain ATCC 33912 / PCC 7942 / FACHB-805) (Anacystis nidulans R2), this protein is Small ribosomal subunit protein bS18.